The following is a 102-amino-acid chain: MEIDIFEDKENKVFNRREIKFYVEYEGEATPKITDIKSKLVALLNSKKESTVVDNVQPHYGEPKALGYAKVYETVEDLEYIETKSVIAKNTEASEEAEEDEE.

Belongs to the eukaryotic ribosomal protein eS24 family.

This is Small ribosomal subunit protein eS24 from Methanobrevibacter smithii (strain ATCC 35061 / DSM 861 / OCM 144 / PS).